The chain runs to 628 residues: Chaperone protein HtpG (628 aa).

The interval 1 to 337 (MSEKKYTFET…SADLPLNVSR (337 aa)) is a; substrate-binding. The segment at 338 to 554 (EILQHNKVID…DYGMSLHMQK (217 aa)) is b. Residues 555 to 628 (MMEEAGQSFM…FVKLVNKYIR (74 aa)) are c.

It belongs to the heat shock protein 90 family. Homodimer.

The protein localises to the cytoplasm. Functionally, molecular chaperone. Has ATPase activity. The chain is Chaperone protein HtpG from Francisella tularensis subsp. tularensis (strain WY96-3418).